An 867-amino-acid chain; its full sequence is Zinc finger protein zfp-1 (867 aa).

Residues 5-57 (VGGCCVCADENGWTDNPLIYCDGENCEVAVHQGCYGIQEVPEGEWFCAKCTKA) form a PHD-type 1 zinc finger. A C2HC pre-PHD-type 2 zinc finger spans residues 69 to 102 (TFCCQLCPFDYGALKKTDRNGWAHVICALYIPEV). Positions 69-186 (TFCCQLCPFD…KYCGYCENHL (118 aa)) are extended PHD2 domain (ePHD2). Residues 125-186 (KLCYICNEER…KYCGYCENHL (62 aa)) form a PHD-type 2 zinc finger. 4 disordered regions span residues 267–311 (GSTV…SLSS), 440–477 (KNDM…GKSP), 503–586 (ADRT…QSNR), and 753–773 (SSGA…STAG). The segment covering 285–311 (PLTTSSRSSVAQDPSPPLTINKNSLSS) has biased composition (polar residues). The segment covering 503–512 (ADRTAAERRA) has biased composition (basic and acidic residues). Residues 516–527 (QSQPSTSTNGGP) are compositionally biased toward polar residues. Residues 538–550 (HTNSTNSTNHQNN) show a composition bias toward low complexity. Positions 551–573 (GLTQNAPASTSMQAGTSSNDGVI) are enriched in polar residues. Positions 574–585 (SQNGTSSTSQSN) are enriched in low complexity. The span at 758–771 (VNSNIQNHRATPST) shows a compositional bias: polar residues.

In terms of assembly, multimer; in vitro. Interacts (via C-terminus) with dot-1.1 to form a heterodimer known as the zfp-1-dot-1.1 complex or DotCom complex. In terms of tissue distribution, isoform a: Expressed at high levels in maturing oocytes, but at low levels in the rest of the germ line (at protein level). Isoform a: Not expressed in the pharynx, germ line and tail. Isoform c: Not expressed in the germ line (at protein level). Isoform c: Uniformly expressed.

It is found in the nucleus. The protein resides in the chromosome. Functionally, recruits the histone methyltransferase dot-1.1 to chromatin to methylate 'Lys-79' of histone H3 and activate transcription. Recognizes and binds histone H3 methylated at 'Lys-4' (H3K4me) at the promoters of target genes. During stress, the zfp-1-dot-1.1 complex also plays a role in the deubiquitination of histone H2B sites, which negatively modulates the RNA polymerase II-induced transcription of highly expressed genes. In response to stress, binds to the pdk-1 promoter to negatively regulate pdk-1 expression, which negatively modulates daf-16/FOXO-mediated gene expression. Thus, most likely via this mechanism, in response to stress, it confers a protective role against neuronal necrosis. Plays a role in Insulin/IGF-1-like signaling (IIS)- and diet restriction-mediated lifespan extension by controlling daf-16/FOXO and pha-4/FOXA recruitment to target promoters. May negatively regulate the expression of genes required for vulval development. May play a role in axon guidance in D-type motor neurons. May suppress sensitivity to RNAi. In terms of biological role, required for migration of HSN motor neurons during embryogenesis. The chain is Zinc finger protein zfp-1 from Caenorhabditis elegans.